Reading from the N-terminus, the 468-residue chain is MRGSPGDAERRQRWGRLFEELDSNKDGRVDVHELRQGLARLGGGNPDPGAQQGISSEGDADPDGGLDLEEFSRYLQEREQRLLLMFHSLDRNQDGHIDVSEIQQSFRALGISISLEQAEKILHSMDRDGTMTIDWQEWRDHFLLHSLENVEDVLYFWKHSTVLDIGECLTVPDEFSKQEKLTGMWWKQLVAGAVAGAVSRTGTAPLDRLKVFMQVHASKTNRLNILGGLRSMVLEGGIRSLWRGNGINVLKIAPESAIKFMAYEQIKRAILGQQETLHVQERFVAGSLAGATAQTIIYPMEVLKTRLTLRRTGQYKGLLDCARRILEREGPRAFYRGYLPNVLGIIPYAGIDLAVYETLKNWWLQQYSHDSADPGILVLLACGTISSTCGQIASYPLALVRTRMQAQASIEGGPQLSMLGLLRHILSQEGMRGLYRGIAPNFMKVIPAVSISYVVYENMKQALGVTSR.

Positions 1-149 (MRGSPGDAER…DHFLLHSLEN (149 aa)) are regulatory N-terminal domain. Residues 1-188 (MRGSPGDAER…EKLTGMWWKQ (188 aa)) lie on the Mitochondrial intermembrane side of the membrane. An EF-hand 1 domain is found at 9-44 (ERRQRWGRLFEELDSNKDGRVDVHELRQGLARLGGG). The Ca(2+) site is built by D22, N24, D26, R28, and E33. The tract at residues 34 to 67 (LRQGLARLGGGNPDPGAQQGISSEGDADPDGGLD) is disordered. Positions 58-67 (GDADPDGGLD) are enriched in acidic residues. EF-hand domains are found at residues 77–112 (EREQRLLLMFHSLDRNQDGHIDVSEIQQSFRALGIS) and 113–148 (ISLEQAEKILHSMDRDGTMTIDWQEWRDHFLLHSLE). Residues D90, N92, D94, H96, and E101 each contribute to the Ca(2+) site. The tract at residues 150–159 (VEDVLYFWKH) is linker region. The interval 165–468 (IGECLTVPDE…MKQALGVTSR (304 aa)) is C-terminal transmembrane transporter domain. Solcar repeat units lie at residues 183 to 269 (GMWW…IKRA), 277 to 362 (LHVQ…LKNW), and 374 to 462 (PGIL…MKQA). A helical transmembrane segment spans residues 189-206 (LVAGAVAGAVSRTGTAPL). The Mitochondrial matrix portion of the chain corresponds to 207–243 (DRLKVFMQVHASKTNRLNILGGLRSMVLEGGIRSLWR). The chain crosses the membrane as a helical span at residues 244–263 (GNGINVLKIAPESAIKFMAY). Residues 264–286 (EQIKRAILGQQETLHVQERFVAG) are Mitochondrial intermembrane-facing. A helical transmembrane segment spans residues 287-300 (SLAGATAQTIIYPM). The Mitochondrial matrix portion of the chain corresponds to 301–336 (EVLKTRLTLRRTGQYKGLLDCARRILEREGPRAFYR). Residues 337-356 (GYLPNVLGIIPYAGIDLAVY) form a helical membrane-spanning segment. Topologically, residues 357-379 (ETLKNWWLQQYSHDSADPGILVL) are mitochondrial intermembrane. Residues 380 to 397 (LACGTISSTCGQIASYPL) form a helical membrane-spanning segment. Residues 398–436 (ALVRTRMQAQASIEGGPQLSMLGLLRHILSQEGMRGLYR) lie on the Mitochondrial matrix side of the membrane. A helical transmembrane segment spans residues 437–456 (GIAPNFMKVIPAVSISYVVY). The Mitochondrial intermembrane segment spans residues 457 to 468 (ENMKQALGVTSR).

Belongs to the mitochondrial carrier (TC 2.A.29) family. As to quaternary structure, interacts with MCU. Interacts with MICU1. In terms of tissue distribution, expressed at low levels in most tissues examined, with highest expression in brain, skeletal muscle and pancreas.

Its subcellular location is the mitochondrion inner membrane. The catalysed reaction is Mg(2+)(out) + phosphate(in) + ATP(out) = Mg(2+)(in) + phosphate(out) + ATP(in). It carries out the reaction ADP(out) + phosphate(in) + H(+)(out) = ADP(in) + phosphate(out) + H(+)(in). The enzyme catalyses AMP(out) + phosphate(in) = AMP(in) + phosphate(out). It catalyses the reaction phosphate(in) + ATP(out) + 2 H(+)(out) = phosphate(out) + ATP(in) + 2 H(+)(in). The catalysed reaction is dADP(in) + ADP(out) = dADP(out) + ADP(in). It carries out the reaction Mg(2+)(in) + ADP(out) + ATP(in) + H(+)(out) = Mg(2+)(out) + ADP(in) + ATP(out) + H(+)(in). The enzyme catalyses ADP(out) + diphosphate(in) = ADP(in) + diphosphate(out). It catalyses the reaction dAMP(in) + ADP(out) + H(+)(out) = dAMP(out) + ADP(in) + H(+)(in). The catalysed reaction is 3'-AMP(in) + ADP(out) + H(+)(out) = 3'-AMP(out) + ADP(in) + H(+)(in). It carries out the reaction dAMP(out) + phosphate(in) = dAMP(in) + phosphate(out). The enzyme catalyses 3'-AMP(out) + phosphate(in) = 3'-AMP(in) + phosphate(out). It catalyses the reaction dADP(out) + phosphate(in) + H(+)(out) = dADP(in) + phosphate(out) + H(+)(in). Its activity is regulated as follows. Activated by an increase in cytosolic calcium levels that induce a conformational change of the N-terminal regulatory domain, uncapping the channel and allowing transport. Inhibited by bathophenanthroline, mersalyl, p-hydroxymercuribenzoate, bromcresol purple, tannic acid, pyridoxal 5'-phosphate and p-hydroxymercuribenzoate. Electroneutral antiporter that mediates the transport of adenine nucleotides through the inner mitochondrial membrane. Originally identified as an ATP-magnesium/inorganic phosphate antiporter, it also acts as a broad specificity adenyl nucleotide antiporter. By regulating the mitochondrial matrix adenine nucleotide pool could adapt to changing cellular energetic demands and indirectly regulate adenine nucleotide-dependent metabolic pathways. Also acts as a regulator of mitochondrial calcium uptake and can probably transport trace amounts of other divalent metal cations in complex with ATP. In vitro, a low activity is also observed with guanyl and pyrimidine nucleotides. This chain is Mitochondrial adenyl nucleotide antiporter SLC25A23, found in Homo sapiens (Human).